The chain runs to 439 residues: Lipase 1 (439 aa).

Residues 1-24 (MRCSLRMQLLLLLGLCVFISRIQG) form the signal peptide. A disordered region spans residues 28–60 (GGEEDEEDEEEEEEEEESVEDETPEDRLQRKNI). A compositionally biased stretch (acidic residues) spans 29–51 (GEEDEEDEEEEEEEEESVEDETP). N-linked (GlcNAc...) asparagine glycosylation is found at Asn124 and Asn151. Ser197 (charge relay system) is an active-site residue. N-linked (GlcNAc...) asparagine glycans are attached at residues Asn346 and Asn379. His393 (charge relay system) is an active-site residue. Asn426 is a glycosylation site (N-linked (GlcNAc...) asparagine).

The protein belongs to the AB hydrolase superfamily. Lipase family. In terms of tissue distribution, in 14 hours embryos expression is seen in the foregut/midgut boundary.

It localises to the secreted. In terms of biological role, could be a digestive enzyme. The chain is Lipase 1 (Lip1) from Drosophila melanogaster (Fruit fly).